A 74-amino-acid chain; its full sequence is Auswaprin-a (74 aa).

The N-terminal stretch at 1-24 (MSSGGLLLLLGLLTLWGVLTPVSS) is a signal peptide. A WAP domain is found at 27-71 (RPKKPGLCPPRPQKPCVKECKNDWSCSGQQKCCNYGCIDECRDPI). Intrachain disulfides connect C34–C59, C42–C63, C46–C58, and C52–C67.

The protein belongs to the venom waprin family. Expressed by the venom gland.

The protein resides in the secreted. In terms of biological role, damages membranes of susceptible bacteria. Has no hemolytic activity. Not toxic to mice. Does not inhibit the proteinases elastase and cathepsin G. This Pseudechis australis (Mulga snake) protein is Auswaprin-a.